A 166-amino-acid chain; its full sequence is Phospholipase A2 myotoxin inhibitor protein (166 aa).

A signal peptide spans 1 to 19 (MRLILLSGLLLLGTFLANG). One can recognise a C-type lectin domain in the interval 46–161 (LKYAFLTVHK…CDDNLLVVCE (116 aa)). Cystine bridges form between C83-C160 and C138-C152. N122 is a glycosylation site (N-linked (GlcNAc...) asparagine).

This sequence belongs to the alpha-type phospholipase A2 inhibitor family. As to quaternary structure, oligomer. Homotrimer; non-covalently linked. Post-translationally, glycosylated. The glycosylation has no role in the association of this PLI and PA2 enzyme. In terms of tissue distribution, expressed by the liver.

The protein localises to the secreted. This phospholipase A2 inhibitor binds directly phospholipase A2 in the presence or absence of calcium. Has anti-enzymatic, anti-myotoxic, anti-edema inducing, anti-cytotoxic, anti-bactericidal, and anti-lethal properties against basic and acidic phospholipases A2 from Bothrops venoms. This Bothrops moojeni (Lance-headed viper) protein is Phospholipase A2 myotoxin inhibitor protein.